The following is a 217-amino-acid chain: Probable GTP-binding protein EngB (217 aa).

Residues 37–214 (SGLEVAFAGR…RAAMARLIGD (178 aa)) enclose the EngB-type G domain. GTP contacts are provided by residues 45–52 (GRSNVGKS), 72–76 (GRTQE), 92–95 (DMPG), 159–162 (TKAD), and 193–195 (TSS). Residues S52 and T74 each coordinate Mg(2+).

Belongs to the TRAFAC class TrmE-Era-EngA-EngB-Septin-like GTPase superfamily. EngB GTPase family. The cofactor is Mg(2+).

Necessary for normal cell division and for the maintenance of normal septation. The chain is Probable GTP-binding protein EngB from Nitrobacter winogradskyi (strain ATCC 25391 / DSM 10237 / CIP 104748 / NCIMB 11846 / Nb-255).